The following is a 423-amino-acid chain: Glutamate-1-semialdehyde 2,1-aminomutase (423 aa).

Lys258 bears the N6-(pyridoxal phosphate)lysine mark.

The protein belongs to the class-III pyridoxal-phosphate-dependent aminotransferase family. HemL subfamily. It depends on pyridoxal 5'-phosphate as a cofactor.

It localises to the cytoplasm. It carries out the reaction (S)-4-amino-5-oxopentanoate = 5-aminolevulinate. It participates in porphyrin-containing compound metabolism; protoporphyrin-IX biosynthesis; 5-aminolevulinate from L-glutamyl-tRNA(Glu): step 2/2. The sequence is that of Glutamate-1-semialdehyde 2,1-aminomutase from Pyrobaculum arsenaticum (strain DSM 13514 / JCM 11321 / PZ6).